We begin with the raw amino-acid sequence, 175 residues long: Small ribosomal subunit protein uS4 (175 aa).

The S4 RNA-binding domain occupies 105–169; that stretch reads RRLQTIVYRQ…SPLADSLHPA (65 aa).

The protein belongs to the universal ribosomal protein uS4 family. In terms of assembly, part of the 30S ribosomal subunit. Contacts protein S5. The interaction surface between S4 and S5 is involved in control of translational fidelity.

One of the primary rRNA binding proteins, it binds directly to 16S rRNA where it nucleates assembly of the body of the 30S subunit. In terms of biological role, with S5 and S12 plays an important role in translational accuracy. The sequence is that of Small ribosomal subunit protein uS4 from Haloquadratum walsbyi (strain DSM 16790 / HBSQ001).